A 230-amino-acid polypeptide reads, in one-letter code: Translation initiation factor IF-3 (230 aa).

2 disordered regions span residues 1–21 and 184–230; these read MAIQHRDPRGGGGSRDARTNR and LQSQ…AAQR. Positions 193–208 are enriched in low complexity; sequence AAAAAAPAAAPAAGAP. Over residues 209-220 the composition is skewed to pro residues; it reads APAPAPAAPAPA. Residues 221 to 230 are compositionally biased toward low complexity; the sequence is PTAADPAAQR.

The protein belongs to the IF-3 family. In terms of assembly, monomer.

It is found in the cytoplasm. IF-3 binds to the 30S ribosomal subunit and shifts the equilibrium between 70S ribosomes and their 50S and 30S subunits in favor of the free subunits, thus enhancing the availability of 30S subunits on which protein synthesis initiation begins. This is Translation initiation factor IF-3 from Anaeromyxobacter dehalogenans (strain 2CP-1 / ATCC BAA-258).